The sequence spans 76 residues: MTMIRMTRMGRKKKPFYRIVVTDSRKRRDGGWIEAIGHYNPVSENKELTLDEERLNYWLSVGAQMSPTVKRLAGKK.

Belongs to the bacterial ribosomal protein bS16 family.

The protein is Small ribosomal subunit protein bS16 of Sulfurovum sp. (strain NBC37-1).